A 1053-amino-acid polypeptide reads, in one-letter code: Protein CLEC16A (1053 aa).

Positions 51-198 constitute an FPL domain; the sequence is IRSITEILIW…AVRTITLNVY (148 aa). Disordered stretches follow at residues 375 to 434, 452 to 471, and 892 to 983; these read SLEM…GESE, STSVQEQNTTDEEKSAAATC, and SSPS…SPSL. Residues 381 to 392 show a composition bias toward basic residues; that stretch reads HKGKRRVQKRPN. Low complexity predominate over residues 892–938; sequence SSPSLSSQSPPSASGSPSGSGSTSHCDSGGTSSSSTPSTAQSPADAP.

This sequence belongs to the CLEC16A/gop-1 family. As to quaternary structure, interacts with RNF41/NRDP1. Almost exclusively expressed in immune cells, including dendritic cells, B-lymphocytes and natural killer cells.

Its subcellular location is the endosome membrane. The protein resides in the lysosome membrane. Regulator of mitophagy through the upstream regulation of the RNF41/NRDP1-PRKN pathway. Mitophagy is a selective form of autophagy necessary for mitochondrial quality control. The RNF41/NRDP1-PRKN pathway regulates autophagosome-lysosome fusion during late mitophagy. May protect RNF41/NRDP1 from proteasomal degradation, RNF41/NRDP1 which regulates proteasomal degradation of PRKN. Plays a key role in beta cells functions by regulating mitophagy/autophagy and mitochondrial health. This is Protein CLEC16A from Homo sapiens (Human).